The following is a 1499-amino-acid chain: Multidrug resistance protein CDR2 (1499 aa).

The Cytoplasmic segment spans residues 1–511 (MSTANTSLSQ…NFLRMKGDPS (511 aa)). An ABC transporter 1 domain is found at 148–402 (FTTEAINKLK…FENMGWKCPQ (255 aa)). Helical transmembrane passes span 512-532 (IPLISILSQLVMGLILASVFF), 546-566 (GALFFSVLFNAFSSLLEILSL), 596-616 (LPVKLLMTMSFNIVYYFMVNL), 621-641 (GNFFFYWLMCASCTLVMSHMF), 660-680 (VFLLAMIIYAGFVLPIPYILG), and 763-783 (FGITVAFAVFFLGVYVALTEF). The Cytoplasmic portion of the chain corresponds to 784-1193 (NKGAMQKGEI…TIVQDWRSPG (410 aa)). In terms of domain architecture, ABC transporter 2 spans 857-1101 (FFWRDLTYQV…MINYFEKYGA (245 aa)). Residue 893 to 900 (GASGAGKT) participates in ATP binding. 6 helical membrane-spanning segments follow: residues 1194-1214 (YIYSKLILVISSSLFIGFSFF), 1229-1249 (AVFMFFVPFTTFIDQMLPYFV), 1279-1299 (IPFQIVVGTISYFCWYYPVGL), 1315-1335 (LMWMLLTAFYVYTSTMGQLAI), 1354-1374 (LCLMFCGVLAGPNVIPGFWIF), and 1465-1485 (FGIFVAFIGINIILTIFFYWL).

This sequence belongs to the ABC transporter superfamily. ABCG family. PDR (TC 3.A.1.205) subfamily.

The protein localises to the membrane. Its function is as follows. Multidrug efflux transporter. Confers resistance to azole antifungal agents, to other antifungals (terbinafine, amorolfine) and to a variety of metabolic inhibitors. This Candida albicans (strain SC5314 / ATCC MYA-2876) (Yeast) protein is Multidrug resistance protein CDR2 (CDR2).